A 184-amino-acid chain; its full sequence is Probable chemoreceptor glutamine deamidase CheD (184 aa).

This sequence belongs to the CheD family.

The enzyme catalyses L-glutaminyl-[protein] + H2O = L-glutamyl-[protein] + NH4(+). Functionally, probably deamidates glutamine residues to glutamate on methyl-accepting chemotaxis receptors (MCPs), playing an important role in chemotaxis. The protein is Probable chemoreceptor glutamine deamidase CheD of Rhizobium rhizogenes (strain K84 / ATCC BAA-868) (Agrobacterium radiobacter).